We begin with the raw amino-acid sequence, 331 residues long: Vitamin B12 import system permease protein BtuC (331 aa).

The next 9 helical transmembrane spans lie at 20–42 (LLIG…WLSP), 62–84 (LLAA…VLLG), 91–113 (GVVG…FPSL), 117–136 (VAFM…LLVV), 148–170 (LLLV…FYFS), 190–209 (SWYQ…WLVL), 240–262 (LAIA…VGLV), 277–299 (LLLP…IARL), and 306–325 (LPLG…WMLV).

The protein belongs to the binding-protein-dependent transport system permease family. FecCD subfamily. The complex is composed of two ATP-binding proteins (BtuD), two transmembrane proteins (BtuC) and a solute-binding protein (BtuF).

The protein resides in the cell inner membrane. Functionally, part of the ABC transporter complex BtuCDF involved in vitamin B12 import. Involved in the translocation of the substrate across the membrane. This Vibrio cholerae serotype O1 (strain ATCC 39315 / El Tor Inaba N16961) protein is Vitamin B12 import system permease protein BtuC.